Consider the following 61-residue polypeptide: MGMRMMFTVFLLVVLATTVVSFMSGRASHGRNAAASDLIALTIKGCCSVPPCIANHPELCG.

The N-terminal stretch at 1–21 (MGMRMMFTVFLLVVLATTVVS) is a signal peptide. A propeptide spanning residues 22–44 (FMSGRASHGRNAAASDLIALTIK) is cleaved from the precursor. Cys-60 is modified (cysteine amide).

The protein belongs to the conotoxin A superfamily. Post-translationally, is not hydroxylated. In terms of processing, contains 2 disulfide bonds. In terms of tissue distribution, expressed by the venom duct.

It localises to the secreted. In terms of biological role, alpha-conotoxins act on postsynaptic membranes, they bind to the nicotinic acetylcholine receptors (nAChR) and thus inhibit them. In Conus amadis (Amadis cone), this protein is Alpha-conotoxine-like Am1.3.